The sequence spans 580 residues: Arginine--tRNA ligase (580 aa).

Positions 131 to 141 (ANPTGPLHVGH) match the 'HIGH' region motif.

Belongs to the class-I aminoacyl-tRNA synthetase family. As to quaternary structure, monomer.

It localises to the cytoplasm. The catalysed reaction is tRNA(Arg) + L-arginine + ATP = L-arginyl-tRNA(Arg) + AMP + diphosphate. This chain is Arginine--tRNA ligase, found in Ruegeria sp. (strain TM1040) (Silicibacter sp.).